The following is a 395-amino-acid chain: Tryptophan synthase beta chain (395 aa).

Position 89 is an N6-(pyridoxal phosphate)lysine (K89).

It belongs to the TrpB family. Tetramer of two alpha and two beta chains. Requires pyridoxal 5'-phosphate as cofactor.

It catalyses the reaction (1S,2R)-1-C-(indol-3-yl)glycerol 3-phosphate + L-serine = D-glyceraldehyde 3-phosphate + L-tryptophan + H2O. The protein operates within amino-acid biosynthesis; L-tryptophan biosynthesis; L-tryptophan from chorismate: step 5/5. Its function is as follows. The beta subunit is responsible for the synthesis of L-tryptophan from indole and L-serine. This chain is Tryptophan synthase beta chain, found in Fusobacterium nucleatum subsp. nucleatum (strain ATCC 25586 / DSM 15643 / BCRC 10681 / CIP 101130 / JCM 8532 / KCTC 2640 / LMG 13131 / VPI 4355).